Reading from the N-terminus, the 138-residue chain is Ribosome maturation factor RimP (138 aa).

Belongs to the RimP family.

It localises to the cytoplasm. In terms of biological role, required for maturation of 30S ribosomal subunits. This is Ribosome maturation factor RimP from Campylobacter concisus (strain 13826).